The primary structure comprises 898 residues: Sodium/hydrogen exchanger 5 (898 aa).

Over 1-48 the chain is Cytoplasmic; that stretch reads MLSAALLLLPGLPLAGAGATEEPTQESGPLGEPPPGLALFRWQWHEVE. A helical transmembrane segment spans residues 49–69; sequence APYLVALWILVASLAKIVFHL. Residues 70 to 76 lie on the Extracellular side of the membrane; it reads SRKVTSL. A helical transmembrane segment spans residues 77-97; it reads VPESCLLILLGLVLGGIVLAV. Residues 98 to 106 are Cytoplasmic-facing; sequence AKKAEYQLE. Residues 107 to 127 form a helical membrane-spanning segment; that stretch reads PGTFFLFLLPPIVLDSGYFMP. The Extracellular portion of the chain corresponds to 128–137; the sequence is SRLFFDNLGA. Residues 138–158 form a helical membrane-spanning segment; it reads ILTYAVVGTLWNAFTTGVALW. Topologically, residues 159 to 176 are cytoplasmic; sequence GLQQAGLVAPRVQAGLLD. A helical membrane pass occupies residues 177–197; it reads FLLFGSLISAVDPVAVLAVFE. Residues 198 to 203 lie on the Extracellular side of the membrane; it reads EVHVNQ. A helical transmembrane segment spans residues 204–224; the sequence is TLFIIIFGESLLNDAVTVVLY. Over 225–249 the chain is Cytoplasmic; sequence KVCNSFVEMGSANVQATDYLKGVAS. Residues 250 to 270 traverse the membrane as a helical segment; sequence LFVVSLGGAAVGLVFAFLLAL. Residues 271–279 lie on the Extracellular side of the membrane; the sequence is TTRFTKRVR. A helical transmembrane segment spans residues 280-300; the sequence is IIEPLLVFLLAYAAYLTAEMA. Over 301–334 the chain is Cytoplasmic; it reads SLSAILAVTMCGLGCKKYVEANISHKSRTAVKYT. Residues 335-355 traverse the membrane as a helical segment; sequence MKTLASCAETVIFMLLGISAV. At 356 to 363 the chain is on the extracellular side; it reads DSSKWAWD. A helical membrane pass occupies residues 364-384; it reads SGLVLGTLFFILFFRALGVVL. Topologically, residues 385 to 401 are cytoplasmic; that stretch reads QTWALNQFRLVPLDKID. Residues 402-422 form a helical membrane-spanning segment; it reads QVVMSYGGLRGAVAFALVILL. Residues 423-431 lie on the Extracellular side of the membrane; sequence DRTKVPAKD. The chain crosses the membrane as a helical span at residues 432-452; that stretch reads YFVATTIVVVFFTVIVQGLTI. Residues 453–898 are Cytoplasmic-facing; the sequence is KPLVKWLRVK…CIQFNRGGRL (446 aa). Disordered regions lie at residues 660–693 and 826–866; these read FTKSKPRPRKTSHKKKDGVANPEATNGKPPRDLG and EEPQ…PQQE. Residues 663–675 are compositionally biased toward basic residues; the sequence is SKPRPRKTSHKKK. A compositionally biased stretch (polar residues) spans 857 to 866; that stretch reads ESSADIPQQE.

Belongs to the monovalent cation:proton antiporter 1 (CPA1) transporter (TC 2.A.36) family. In terms of assembly, interacts with CHP1 and CHP2. Interacts with ARRB2; facilitates the endocytosis of SLC9A5 from the plasma membrane. Interacts with RACK1; this interaction positively regulates SLC9A5 activity and promote SLC9A5 localization to focal adhesions. Interacts with SCAMP2; this interaction regulates SLC9A5 cell-surface targeting and SLC9A5 activity. Phosphorylated by PRKAA2; promotes its accumulation at the cell surface. Phosphorylated by CSNK2A1 in a manner favoring its beta-arrestin binding and endocytosis. Highest expression level is detected in brain. Expressed in hippocampal neurons (at protein level).

Its subcellular location is the cell membrane. It is found in the recycling endosome membrane. The protein localises to the cell projection. The protein resides in the dendritic spine membrane. It localises to the synaptic cell membrane. Its subcellular location is the cell junction. It is found in the focal adhesion. The enzyme catalyses Na(+)(in) + H(+)(out) = Na(+)(out) + H(+)(in). Functionally, plasma membrane Na(+)/H(+) antiporter. Mediates the electroneutral exchange of intracellular H(+) ions for extracellular Na(+) in 1:1 stoichiometry. Responsible for regulating intracellular pH homeostasis, in particular in neural tissues. Acts as a negative regulator of dendritic spine growth. Plays a role in postsynaptic remodeling and signaling. Can also contribute to organellar pH regulation, with consequences for receptor tyrosine kinase trafficking. The chain is Sodium/hydrogen exchanger 5 (Slc9a5) from Mus musculus (Mouse).